The sequence spans 234 residues: Sugar fermentation stimulation protein A (234 aa).

The H-T-H motif DNA-binding region spans 201–220 (LLSEAQNKGVEVLAYKAELS).

The protein belongs to the SfsA family.

Functionally, binds to DNA non-specifically. Could be a regulatory factor involved in maltose metabolism. The sequence is that of Sugar fermentation stimulation protein A from Salmonella arizonae (strain ATCC BAA-731 / CDC346-86 / RSK2980).